Consider the following 416-residue polypeptide: Caspase-9 (416 aa).

A CARD domain is found at 1–92 (MDEADRRLLR…DMLASFLRTN (92 aa)). At T125 the chain carries Phosphothreonine; by MAPK1. Phosphotyrosine; by ABL1 is present on Y153. Catalysis depends on residues H237 and C287. The interval 294–320 (HGFEVASTSPEDESPGSNPEPDATPFQ) is disordered. S302, S307, and S310 each carry phosphoserine. Positions 316-330 (ATPFQEGLRTFDQLD) are excised as a propeptide. At R355 the chain carries (Microbial infection) ADP-riboxanated arginine.

It belongs to the peptidase C14A family. In terms of assembly, heterotetramer that consists of two anti-parallel arranged heterodimers, each one formed by a 35 kDa (p35) and a 10 kDa (p10) subunit. Caspase-9 and APAF1 bind to each other via their respective NH2-terminal CED-3 homologous domains in the presence of cytochrome C and ATP. Interacts (inactive form) with EFHD2. Interacts with HAX1. Interacts with BIRC2/c-IAP1, XIAP/BIRC4, BIRC5/survivin, BIRC6/bruce and BIRC7/livin. Interacts with ABL1 (via SH3 domain); the interaction is direct and increases in the response of cells to genotoxic stress and ABL1/c-Abl activation. Interacts with BCL2L10. Interacts with NleF from pathogenic E.coli. Post-translationally, cleavages at Asp-315 by granzyme B and at Asp-330 by caspase-3 generate the two active subunits. Caspase-8 and -10 can also be involved in these processing events. In terms of processing, phosphorylated at Thr-125 by MAPK1/ERK2. Phosphorylation at Thr-125 is sufficient to block caspase-9 processing and subsequent caspase-3 activation. Phosphorylation on Tyr-153 by ABL1/c-Abl; occurs in the response of cells to DNA damage. (Microbial infection) ADP-riboxanation by C.violaceum CopC blocks CASP9 processing, preventing CASP9 activation and ability to mediate intrinsic apoptosis. Post-translationally, ubiquitinated by BIRC6; this activity is inhibited by DIABLO/SMAC. As to expression, ubiquitous, with highest expression in the heart, moderate expression in liver, skeletal muscle, and pancreas. Low levels in all other tissues. Within the heart, specifically expressed in myocytes.

The catalysed reaction is Strict requirement for an Asp residue at position P1 and with a marked preference for His at position P2. It has a preferred cleavage sequence of Leu-Gly-His-Asp-|-Xaa.. Inhibited by the effector protein NleF that is produced by pathogenic E.coli; this inhibits apoptosis. Inhibited by BIRC6; following inhibition of BIRC6-caspase binding by DIABLO/SMAC, BIRC6 is subjected to caspase cleavage, leading to an increase in active caspases. Its function is as follows. Involved in the activation cascade of caspases responsible for apoptosis execution. Binding of caspase-9 to Apaf-1 leads to activation of the protease which then cleaves and activates effector caspases caspase-3 (CASP3) or caspase-7 (CASP7). Promotes DNA damage-induced apoptosis in a ABL1/c-Abl-dependent manner. Proteolytically cleaves poly(ADP-ribose) polymerase (PARP). Cleaves BIRC6 following inhibition of BIRC6-caspase binding by DIABLO/SMAC. Functionally, lacks activity is an dominant-negative inhibitor of caspase-9. The protein is Caspase-9 (CASP9) of Homo sapiens (Human).